Reading from the N-terminus, the 513-residue chain is GMP synthase [glutamine-hydrolyzing] (513 aa).

The 191-residue stretch at 7–197 folds into the Glutamine amidotransferase type-1 domain; that stretch reads TILVLDFGGQ…LFGVCGCTGE (191 aa). Cys-84 acts as the Nucleophile in catalysis. Catalysis depends on residues His-171 and Glu-173. The GMPS ATP-PPase domain occupies 198-387; it reads WTMENFIEEQ…LGLPEDIVWR (190 aa). Residue 225 to 231 coordinates ATP; the sequence is SGGVDSS.

In terms of assembly, homodimer.

The catalysed reaction is XMP + L-glutamine + ATP + H2O = GMP + L-glutamate + AMP + diphosphate + 2 H(+). The protein operates within purine metabolism; GMP biosynthesis; GMP from XMP (L-Gln route): step 1/1. Functionally, catalyzes the synthesis of GMP from XMP. In Heliobacterium modesticaldum (strain ATCC 51547 / Ice1), this protein is GMP synthase [glutamine-hydrolyzing].